A 500-amino-acid polypeptide reads, in one-letter code: Glutamate--tRNA ligase (500 aa).

The short motif at 12 to 22 (PSPTGHLHIGN) is the 'HIGH' region element. Residues 259-263 (KLSKR) carry the 'KMSKS' region motif. Lysine 262 serves as a coordination point for ATP.

Belongs to the class-I aminoacyl-tRNA synthetase family. Glutamate--tRNA ligase type 1 subfamily. In terms of assembly, monomer.

Its subcellular location is the cytoplasm. It carries out the reaction tRNA(Glu) + L-glutamate + ATP = L-glutamyl-tRNA(Glu) + AMP + diphosphate. In terms of biological role, catalyzes the attachment of glutamate to tRNA(Glu) in a two-step reaction: glutamate is first activated by ATP to form Glu-AMP and then transferred to the acceptor end of tRNA(Glu). In Lactobacillus delbrueckii subsp. bulgaricus (strain ATCC BAA-365 / Lb-18), this protein is Glutamate--tRNA ligase.